A 358-amino-acid polypeptide reads, in one-letter code: Bi-functional coumaroyl CoA and feruloyl CoA ortho-hydroxylase F6H2-2-1 (358 aa).

Residues 200 to 308 form the Fe2OG dioxygenase domain; that stretch reads SKESLLMGSR…RISVPVFVNP (109 aa). Y216 is a 2-oxoglutarate binding site. H231, D233, and H289 together coordinate Fe cation. Residues R299 and S301 each contribute to the 2-oxoglutarate site.

It belongs to the iron/ascorbate-dependent oxidoreductase family. It depends on L-ascorbate as a cofactor. Fe(2+) is required as a cofactor. In terms of tissue distribution, mostly expressed in underground stems and stems.

It carries out the reaction (E)-4-coumaroyl-CoA + 2-oxoglutarate + O2 = (E)-2,4-dihydroxycinnamoyl-CoA + succinate + CO2. The enzyme catalyses (E)-feruloyl-CoA + 2-oxoglutarate + O2 = (E)-6-hydroxyferuloyl-CoA + succinate + CO2. It participates in phenylpropanoid metabolism. 2-oxoglutarate (OG)- and Fe(II)-dependent dioxygenase (2OGD) involved in scopoletin and umbelliferone biosynthesis. Converts feruloyl CoA into 6'-hydroxyferuloyl CoA, and p-coumaroyl CoA into 2,4-dihydroxycinnamoyl-CoA, but has no activity toward caffeoyl-CoA. This is Bi-functional coumaroyl CoA and feruloyl CoA ortho-hydroxylase F6H2-2-1 from Ipomoea batatas (Sweet potato).